The following is a 396-amino-acid chain: L-lactate dehydrogenase (396 aa).

The FMN hydroxy acid dehydrogenase domain occupies 1-380; it reads MIISAASDYR…TQDSLVQGLG (380 aa). Residue Tyr24 participates in substrate binding. FMN-binding residues include Ser106 and Gln127. A substrate-binding site is contributed by Tyr129. FMN is bound at residue Thr155. Arg164 is a substrate binding site. Residue Lys251 coordinates FMN. The Proton acceptor role is filled by His275. Arg278 is a binding site for substrate. 306 to 330 contacts FMN; that stretch reads DSGIRNGLDVVRMIALGADTVLLGR.

Belongs to the FMN-dependent alpha-hydroxy acid dehydrogenase family. Requires FMN as cofactor.

The protein resides in the cell inner membrane. It carries out the reaction (S)-lactate + A = pyruvate + AH2. Its function is as follows. Catalyzes the conversion of L-lactate to pyruvate. Is coupled to the respiratory chain. In Shigella boydii serotype 4 (strain Sb227), this protein is L-lactate dehydrogenase.